The chain runs to 272 residues: Cyclase-like protein 2 (272 aa).

A signal peptide spans 1–24 (MAVPPLFFLLTLLSLPSLLISAGA).

This sequence belongs to the Cyclase 1 superfamily.

It localises to the secreted. The protein resides in the extracellular space. Its subcellular location is the extracellular matrix. In terms of biological role, may function redundantly with CYCLASE1 for normal plant growth, development and viability. In Arabidopsis thaliana (Mouse-ear cress), this protein is Cyclase-like protein 2.